A 628-amino-acid chain; its full sequence is NUAK family SNF1-like kinase 2 (628 aa).

An N-acetylmethionine modification is found at M1. A Protein kinase domain is found at 53 to 303 (YEFLETLGKG…LEDVASHWWV (251 aa)). ATP is bound by residues 59–67 (LGKGTYGKV) and K81. The active-site Proton acceptor is the D175. T208 is modified (phosphothreonine). Disordered regions lie at residues 355 to 492 (KQHA…PQAS) and 522 to 570 (GSLD…PLRG). Pro residues predominate over residues 428 to 444 (ELSPIPVSPGQAAPPLP). At S435 the chain carries Phosphoserine. The segment covering 457 to 469 (SGYYSSPEPSESG) has biased composition (low complexity). Phosphoserine is present on residues S523, S544, S547, and S573.

The protein belongs to the protein kinase superfamily. CAMK Ser/Thr protein kinase family. SNF1 subfamily. Requires Mg(2+) as cofactor. In terms of processing, phosphorylated at Thr-208 by STK11/LKB1 in complex with STE20-related adapter-alpha (STRADA) pseudo kinase and CAB39. Autophosphorylation is also possible at Thr-208.

The enzyme catalyses L-seryl-[protein] + ATP = O-phospho-L-seryl-[protein] + ADP + H(+). The catalysed reaction is L-threonyl-[protein] + ATP = O-phospho-L-threonyl-[protein] + ADP + H(+). Activated by phosphorylation on Thr-208. Functionally, stress-activated kinase involved in tolerance to glucose starvation. Induces cell-cell detachment by increasing F-actin conversion to G-actin. Expression is induced by CD95 or TNF-alpha, via NF-kappa-B. Protects cells from CD95-mediated apoptosis and is required for the increased motility and invasiveness of CD95-activated tumor cells. Phosphorylates LATS1 and LATS2. Plays a key role in neural tube closure during embryonic development through LATS2 phosphorylation and regulation of the nuclear localization of YAP1 a critical downstream regulatory target in the Hippo signaling pathway. The sequence is that of NUAK family SNF1-like kinase 2 from Pongo abelii (Sumatran orangutan).